Reading from the N-terminus, the 272-residue chain is MTFTEQLSAAWQRNDSLLCVGLDPDPAKLPLSMTGTGGAIFSFCREIVDATADLVCAFKPQIAYFHSQRAEDQLEQLVEYIHDAHPGVPVILDAKRGDIGSTAEHYAIEAFERYKADAVTVSPYMGFDSMSPYLAYPGKGVIVLCRTSNPGGSDVQFLQVDGKPLYQVVAEAARERWNTNGQMGLVVGATFPNEIAKVRQIVGDMPLLIPGIGAQGGDIEATVKAGRTADGTGMMINSSRAILYASREKDFALAARNVALQTRETINRYRHG.

The Proton donor role is filled by lysine 95.

This sequence belongs to the OMP decarboxylase family. Type 2 subfamily.

The enzyme catalyses orotidine 5'-phosphate + H(+) = UMP + CO2. It participates in pyrimidine metabolism; UMP biosynthesis via de novo pathway; UMP from orotate: step 2/2. The sequence is that of Orotidine 5'-phosphate decarboxylase from Cupriavidus metallidurans (strain ATCC 43123 / DSM 2839 / NBRC 102507 / CH34) (Ralstonia metallidurans).